The primary structure comprises 193 residues: uncharacterized protein (193 aa).

4 consecutive transmembrane segments (helical) span residues Leu40–Ile56, Ala63–Cys79, Cys86–Cys110, and Phe117–Tyr138. Positions Thr158–Tyr193 are disordered.

It belongs to the chlamydial CPn_0442/CT_006/TC_0274 family.

The protein localises to the cell membrane. This is an uncharacterized protein from Chlamydia muridarum (strain MoPn / Nigg).